Here is a 169-residue protein sequence, read N- to C-terminus: N-alpha-acetyltransferase 50 (169 aa).

One can recognise an N-acetyltransferase domain in the interval 5 to 154 (IELGDVTPHN…DAHVLQKNLK (150 aa)). Position 30 (Tyr-30) interacts with substrate. Residue Tyr-72 is part of the active site. Met-74 provides a ligand contact to substrate. 76 to 89 (LGCLAPYRRLGIGT) contacts acetyl-CoA. 78 to 89 (CLAPYRRLGIGT) serves as a coordination point for CoA. Residue His-111 is part of the active site. 116–125 (NESAIDFYRK) provides a ligand contact to CoA. Positions 137–140 (YYKR) are substrate.

This sequence belongs to the acetyltransferase family. GNAT subfamily.

It localises to the cytoplasm. The protein localises to the nucleus. The catalysed reaction is N-terminal L-methionyl-L-alanyl-[protein] + acetyl-CoA = N-terminal N(alpha)-acetyl-L-methionyl-L-alanyl-[protein] + CoA + H(+). The enzyme catalyses N-terminal L-methionyl-L-seryl-[protein] + acetyl-CoA = N-terminal N(alpha)-acetyl-L-methionyl-L-seryl-[protein] + CoA + H(+). It catalyses the reaction N-terminal L-methionyl-L-valyl-[protein] + acetyl-CoA = N-terminal N(alpha)-acetyl-L-methionyl-L-valyl-[protein] + CoA + H(+). It carries out the reaction N-terminal L-methionyl-L-threonyl-[protein] + acetyl-CoA = N-terminal N(alpha)-acetyl-L-methionyl-L-threonyl-[protein] + CoA + H(+). The catalysed reaction is N-terminal L-methionyl-L-lysyl-[protein] + acetyl-CoA = N-terminal N(alpha)-acetyl-L-methionyl-L-lysyl-[protein] + CoA + H(+). The enzyme catalyses N-terminal L-methionyl-L-leucyl-[protein] + acetyl-CoA = N-terminal N(alpha)-acetyl-L-methionyl-L-leucyl-[protein] + CoA + H(+). It catalyses the reaction N-terminal L-methionyl-L-phenylalanyl-[protein] + acetyl-CoA = N-terminal N(alpha)-acetyl-L-methionyl-L-phenylalanyl-[protein] + CoA + H(+). It carries out the reaction N-terminal L-methionyl-L-tyrosyl-[protein] + acetyl-CoA = N-terminal N(alpha)-acetyl-L-methionyl-L-tyrosyl-[protein] + CoA + H(+). Functionally, N-alpha-acetyltransferase that acetylates the N-terminus of proteins that retain their initiating methionine. Has a broad substrate specificity: able to acetylate the initiator methionine of most peptides, except for those with a proline in second position. Also displays N-epsilon-acetyltransferase activity by mediating acetylation of the side chain of specific lysines on proteins. The relevance of N-epsilon-acetyltransferase activity is however unclear. Required for sister chromatid cohesion during mitosis by promoting binding of CDCA5/sororin to cohesin. The polypeptide is N-alpha-acetyltransferase 50 (naa50) (Xenopus tropicalis (Western clawed frog)).